A 197-amino-acid polypeptide reads, in one-letter code: Casparian strip membrane protein 5 (197 aa).

Residues 1–34 are Cytoplasmic-facing; sequence MSTTIDMPGSSKAAKAGKPVLVTTPSRPGGWKKG. A helical transmembrane segment spans residues 35–55; the sequence is VAIMDFILRLGAIAAALGAAA. The Extracellular segment spans residues 56–84; sequence TMGLSDQTLPFFTQFFQFEASYDSFTTFQ. Residues 85 to 105 traverse the membrane as a helical segment; sequence FFVITMALVAGYLVLSLPLSI. Topologically, residues 106 to 117 are cytoplasmic; sequence VAVVRPHAAGPR. A helical transmembrane segment spans residues 118–138; it reads LFLIILDTVFLTLATASGASA. Residues 139–171 lie on the Extracellular side of the membrane; it reads ASIVYLAHNGNQDTNWIAICNQFGDFCAQTSGA. A helical transmembrane segment spans residues 172-192; that stretch reads VVSSLVAVLVFVLLIVMSALV. Topologically, residues 193 to 197 are cytoplasmic; the sequence is LGKKH.

The protein belongs to the Casparian strip membrane proteins (CASP) family. Homodimer and heterodimers.

The protein resides in the cell membrane. Its function is as follows. Regulates membrane-cell wall junctions and localized cell wall deposition. Required for establishment of the Casparian strip membrane domain (CSD) and the subsequent formation of Casparian strips, a cell wall modification of the root endodermis that determines an apoplastic barrier between the intraorganismal apoplasm and the extraorganismal apoplasm and prevents lateral diffusion. In Lotus japonicus (Lotus corniculatus var. japonicus), this protein is Casparian strip membrane protein 5.